The chain runs to 398 residues: Cytochrome b (398 aa).

A helical membrane pass occupies residues 45–65 (LGSIAGIALVIQIITGVILAM). H95 and H109 together coordinate heme b. The next 9 membrane-spanning stretches (helical) occupy residues 96–116 (AVGA…GLYY), 129–149 (IGII…VLPW), 164–184 (FSAI…GFSV), 192–212 (FFSL…LHLV), 245–265 (FVGF…EPNY), 277–297 (PLVT…YAIL), 304–324 (LGGV…PWLD), 339–359 (MAFW…GQPA), and 366–386 (ISRF…PLIG). Positions 196 and 210 each coordinate heme b.

Belongs to the cytochrome b family. As to quaternary structure, the main subunits of complex b-c1 are: cytochrome b, cytochrome c1 and the Rieske protein. The cofactor is heme b.

Its subcellular location is the cell membrane. Component of the ubiquinol-cytochrome c reductase complex (complex III or cytochrome b-c1 complex), which is a respiratory chain that generates an electrochemical potential coupled to ATP synthesis. This Rickettsia conorii (strain ATCC VR-613 / Malish 7) protein is Cytochrome b (petB).